Here is a 972-residue protein sequence, read N- to C-terminus: MSFFNLDRFRFQRDNAVGIHRKSPDGSNSDKENKQAHQRKADGQFPSGKTSRQVLEDVSSDDEVVRMGKDSASDLQQHINKDMEDKIIKLLEIFPQKSKKDLLEVIENTSTLDGAVAHCLMIYGDEDSGGRKDKGGRSDDDDQPKKKRKIQRSDSSESEDEDSEDEESEEPSREKQEALLKKLKRKLPDIEKEVLRDILKEHDWDYENALGSLLVFSSTDTSSPENQKSKQKSKSSHSKEKTDKITQRPSGSSSLSRWLTAASSHVPEVSSMSALKTQKSALSKSTSKNSSFKRKRGDEMPLNDVSASEDEDEIDSDVDSMSDDQDSEDEDSISGTLQDKIIQFLQDASLDELALISGCSIKKAQKIISLRPFNTWKDVKEQFFKDNGLSIDLVHGCKVVLKERQVVLDLMGRCEKIAQKMTKDVTQVIEAGMGSIKQPKVLNSNLKLQAYQLIGLKWLILLHQHKLSGILADEMGLGKTIQAIAFLAHLYEKGIKGPHLITVPSSTLDNWVRELGLWCPSLKVLIYYGSVEDRKYLRQDILTGLIDFNIIVSTYNLTIGNDHDRSLFRKLKLKYAVFDEGHMLKNMNSLRYRHLMTINAEHRLLLTGTPLQNNLLELMSLLNFIMPSMFSSSTSQISKMFSTRSSEEESSFHKDRIAQARLIMKPFILRRVKSEVLKELPPKMEKIEMCPMSDAQHKLYDILFKRLKKTPNGDKRELCNVMMQLRKMANHPLLHRQYYTSDKLAAMSKAMLKEPTHYDADPALIQEDMEVMSDFELHNLCREYSSISGFQLEKALILDSGKFALLTKTLAKLKEKGDRVVLFSQFTMMLDIVEILLKHLDHQYVRLDGSTPMAERIGLIDKYNTNPEIFVFLLSTRAGGQGINLASANTVILHDIDCNPFNDKQAEDRCHRMGQTRTVQVIKLISKDSIEDCMLRVGQEKLKLEQDMTTDEGEDGAITEQMAELLKVSLGL.

Disordered stretches follow at residues 15–76 (NAVG…SDLQ), 125–177 (DEDS…EKQE), and 217–333 (SSTD…EDSI). Basic and acidic residues-rich tracts occupy residues 22-42 (KSPD…RKAD) and 63-72 (EVVRMGKDSA). In terms of domain architecture, CUE 1 spans 82–127 (DMEDKIIKLLEIFPQKSKKDLLEVIENTSTLDGAVAHCLMIYGDED). Residues 128 to 138 (SGGRKDKGGRS) are compositionally biased toward basic and acidic residues. Residues 156 to 169 (SESEDEDSEDEESE) are compositionally biased toward acidic residues. In terms of domain architecture, CUE 2 spans 175–218 (KQEALLKKLKRKLPDIEKEVLRDILKEHDWDYENALGSLLVFSS). Residues 237–246 (HSKEKTDKIT) are compositionally biased toward basic and acidic residues. The segment covering 247 to 263 (QRPSGSSSLSRWLTAAS) has biased composition (polar residues). The segment covering 279 to 290 (KSALSKSTSKNS) has biased composition (low complexity). Residues 307 to 332 (ASEDEDEIDSDVDSMSDDQDSEDEDS) are compositionally biased toward acidic residues. The region spanning 460-628 (ILLHQHKLSG…MSLLNFIMPS (169 aa)) is the Helicase ATP-binding domain. 473–480 (DEMGLGKT) serves as a coordination point for ATP. A DEGH box motif is present at residues 579-582 (DEGH). Positions 805–966 (LLTKTLAKLK…AITEQMAELL (162 aa)) constitute a Helicase C-terminal domain.

It belongs to the SNF2/RAD54 helicase family.

The protein localises to the nucleus. The protein resides in the chromosome. The enzyme catalyses ATP + H2O = ADP + phosphate + H(+). Its function is as follows. DNA helicase that possesses intrinsic ATP-dependent nucleosome-remodeling activity and is both required for DNA repair and heterochromatin organization. Promotes DNA end resection of double-strand breaks (DSBs) following DNA damage: probably acts by weakening histone DNA interactions in nucleosomes flanking DSBs. Required for the restoration of heterochromatin organization after replication. The chain is SWI/SNF-related matrix-associated actin-dependent regulator of chromatin subfamily A containing DEAD/H box 1A (smarcad1a) from Danio rerio (Zebrafish).